We begin with the raw amino-acid sequence, 427 residues long: Enolase (427 aa).

Gln-162 lines the (2R)-2-phosphoglycerate pocket. Glu-204 serves as the catalytic Proton donor. Mg(2+)-binding residues include Asp-241, Glu-282, and Asp-309. Lys-334, Arg-363, Ser-364, and Lys-385 together coordinate (2R)-2-phosphoglycerate. Lys-334 (proton acceptor) is an active-site residue.

The protein belongs to the enolase family. It depends on Mg(2+) as a cofactor.

It localises to the cytoplasm. The protein resides in the secreted. It is found in the cell surface. It catalyses the reaction (2R)-2-phosphoglycerate = phosphoenolpyruvate + H2O. It participates in carbohydrate degradation; glycolysis; pyruvate from D-glyceraldehyde 3-phosphate: step 4/5. Its function is as follows. Catalyzes the reversible conversion of 2-phosphoglycerate (2-PG) into phosphoenolpyruvate (PEP). It is essential for the degradation of carbohydrates via glycolysis. The polypeptide is Enolase (Frankia alni (strain DSM 45986 / CECT 9034 / ACN14a)).